The chain runs to 229 residues: Potassium/proton antiporter CemA (229 aa).

3 consecutive transmembrane segments (helical) span residues 6–26, 107–127, and 189–209; these read AFIP…ISLC, ILHF…SFWG, and ILSG…KYWI.

It belongs to the CemA family.

It localises to the plastid. The protein localises to the chloroplast inner membrane. It catalyses the reaction K(+)(in) + H(+)(out) = K(+)(out) + H(+)(in). Its function is as follows. Contributes to K(+)/H(+) antiport activity by supporting proton efflux to control proton extrusion and homeostasis in chloroplasts in a light-dependent manner to modulate photosynthesis. Prevents excessive induction of non-photochemical quenching (NPQ) under continuous-light conditions. Indirectly promotes efficient inorganic carbon uptake into chloroplasts. This chain is Potassium/proton antiporter CemA, found in Barbarea verna (Land cress).